The chain runs to 162 residues: Precorrin-2 dehydrogenase (162 aa).

NAD(+) contacts are provided by residues serine 20 to isoleucine 21 and proline 41 to aspartate 42.

It belongs to the precorrin-2 dehydrogenase / sirohydrochlorin ferrochelatase family.

It carries out the reaction precorrin-2 + NAD(+) = sirohydrochlorin + NADH + 2 H(+). It functions in the pathway cofactor biosynthesis; adenosylcobalamin biosynthesis; sirohydrochlorin from precorrin-2: step 1/1. Its pathway is porphyrin-containing compound metabolism; siroheme biosynthesis; sirohydrochlorin from precorrin-2: step 1/1. Catalyzes the dehydrogenation of precorrin-2 to form sirohydrochlorin which is used as a precursor in both siroheme biosynthesis and in the anaerobic branch of adenosylcobalamin biosynthesis. This Bacillus subtilis (strain 168) protein is Precorrin-2 dehydrogenase (sirC).